The following is a 169-amino-acid chain: Transcription antitermination protein NusB (169 aa).

A disordered region spans residues 147–169 (RGLIDQSFSRPQKPESEATEIEE).

The protein belongs to the NusB family.

In terms of biological role, involved in transcription antitermination. Required for transcription of ribosomal RNA (rRNA) genes. Binds specifically to the boxA antiterminator sequence of the ribosomal RNA (rrn) operons. The sequence is that of Transcription antitermination protein NusB from Chlorobium chlorochromatii (strain CaD3).